Here is a 514-residue protein sequence, read N- to C-terminus: CBL-interacting protein kinase 25 (514 aa).

Residues 21-281 (YEFGPLVGEG…IPEIMEMRWF (261 aa)) form the Protein kinase domain. ATP is bound by residues 27-35 (VGEGNFAKV) and K50. D149 (proton acceptor) is an active-site residue. Positions 167–196 (DFGLSALADMERREAHLQTVCGTPLFLAPE) are activation loop. Positions 303–340 (GLDGEPELYDSDTDTIESSSSSESPTPVAGTPRGMHTS) are disordered. The segment covering 304–317 (LDGEPELYDSDTDT) has biased composition (acidic residues). Over residues 318–329 (IESSSSSESPTP) the composition is skewed to low complexity. Positions 323 to 395 (SSESPTPVAG…PSFDLSGLFE (73 aa)) constitute an NAF domain. The segment at 398–427 (GERMRFVSGAPVADIIAKLQEIAGMVSFTA) is PPI.

Belongs to the protein kinase superfamily. CAMK Ser/Thr protein kinase family. SNF1 subfamily. Requires Mn(2+) as cofactor.

The catalysed reaction is L-seryl-[protein] + ATP = O-phospho-L-seryl-[protein] + ADP + H(+). It catalyses the reaction L-threonyl-[protein] + ATP = O-phospho-L-threonyl-[protein] + ADP + H(+). Functionally, CIPK serine-threonine protein kinases interact with CBL proteins. Binding of a CBL protein to the regulatory NAF domain of CIPK protein lead to the activation of the kinase in a calcium-dependent manner. This chain is CBL-interacting protein kinase 25 (CIPK25), found in Oryza sativa subsp. japonica (Rice).